The following is a 1508-amino-acid chain: Calponin homology domain-containing protein DDB_G0272472 (1508 aa).

6 disordered regions span residues 1 to 165 (MFRN…KNDF), 197 to 290 (DSEE…NLSP), 309 to 518 (DFKS…TSIV), 531 to 561 (AANATTTNNDNNNNNNNTSSPTNKSTNLFND), 680 to 706 (KEKQDQLEKQRKLEQQRLQKEKDEKEL), and 1036 to 1391 (KIEK…KKSA). The segment covering 81-107 (SSSPSTSTTTTTKSSSTTTTTTTSSSS) has biased composition (low complexity). A compositionally biased stretch (basic and acidic residues) spans 208–222 (PIKKKQSNDLEKNIF). 3 stretches are compositionally biased toward low complexity: residues 234–251 (KQSTVTKPKQPQQQQKQP), 263–290 (FGDSSLSLDSPLLASKSSPPKSSVNLSP), and 315–332 (SNNTTTVKKAVPISKSKP). Composition is skewed to basic and acidic residues over residues 337–346 (QKEEIKEVST) and 362–371 (VDEKPKERST). Positions 380–391 (KTVTVKSNNSFE) are enriched in polar residues. Low complexity predominate over residues 395–438 (FGSTTTNDDGGDNDFSFTPATTPSSSSSTKATTTSPSSTTTTKS). Positions 439–452 (NINIGQKSNKSVDQ) are enriched in polar residues. The stretch at 455 to 498 (QFLNDIFQQEEQDKKRREEEAKLKQQQKQKEKEQIKDEIDDLFK) forms a coiled coil. Residues 465-498 (EQDKKRREEEAKLKQQQKQKEKEQIKDEIDDLFK) are compositionally biased toward basic and acidic residues. Low complexity-rich tracts occupy residues 500–516 (SKPTTTTTSTPSKSTTS) and 531–557 (AANATTTNNDNNNNNNNTSSPTNKSTN). The segment covering 1036–1164 (KIEKEKEERD…DQEEKEKQLK (129 aa)) has biased composition (basic and acidic residues). Composition is skewed to low complexity over residues 1165–1181 (EQQQQQKVIIPTTTTTT) and 1189–1206 (DSDALLNLPDSASSSSHS). The segment covering 1216 to 1225 (SKAKGRKKPT) has biased composition (basic residues). Residues 1226–1235 (RRELTKDGNR) are compositionally biased toward basic and acidic residues. A compositionally biased stretch (low complexity) spans 1333-1355 (PTVTQTTTTTTTPPTTPPSSSVQ). Residues 1362-1374 (RSFSGSSFMGINS) show a composition bias toward polar residues. The region spanning 1397–1504 (MKALDVLLQW…YLSEFFKVMK (108 aa)) is the Calponin-homology (CH) domain.

The chain is Calponin homology domain-containing protein DDB_G0272472 from Dictyostelium discoideum (Social amoeba).